Consider the following 401-residue polypeptide: Phosphoglycerate kinase 3, cytosolic (401 aa).

The (2R)-3-phosphoglycerate site is built by Val-24, Asp-25, Asn-27, Arg-41, Ser-63, His-64, Gly-66, Arg-67, Arg-122, His-154, and Arg-155. Residue Gly-200 participates in ADP binding. Gly-200 is a CDP binding site. Residues Lys-202 and Lys-206 each coordinate AMP. An ATP-binding site is contributed by Lys-206. Gly-224 lines the ADP pocket. Gly-224 provides a ligand contact to CDP. The AMP site is built by Gly-225 and Gly-297. Residues Gly-225, Gly-297, and Asn-321 each coordinate ATP. 2 residues coordinate CDP: Gly-322 and Phe-327. ADP is bound at residue Phe-327. Glu-328 contributes to the AMP binding site. ATP contacts are provided by Glu-328, Asp-359, and Ser-360. Asp-359 contacts Mg(2+).

It belongs to the phosphoglycerate kinase family. Monomer. It depends on Mg(2+) as a cofactor. Expressed in roots, leaves and inflorescence.

It localises to the cytoplasm. It carries out the reaction (2R)-3-phosphoglycerate + ATP = (2R)-3-phospho-glyceroyl phosphate + ADP. The protein operates within carbohydrate degradation; glycolysis; pyruvate from D-glyceraldehyde 3-phosphate: step 2/5. The chain is Phosphoglycerate kinase 3, cytosolic from Arabidopsis thaliana (Mouse-ear cress).